Reading from the N-terminus, the 199-residue chain is MSEYSNRSQAGADYEWHYEYYEDEEPVSFEGLRANRYSIVIGFWVGLAVFVIFMFFVLTLLTKTGAPHPEMCDASMKPHVLIGCELEVGGSLAFSLPPLPDQSRSLFHFYIHKEERVKTHKDAVIGRGMHCGRGNAERADEDEHFMSSFNIPNFVNSEQSSSLGHDDFLLSEPPIITDGQSDELKTAEPAHLCYDIIRH.

N6 carries an N-linked (GlcNAc...) asparagine glycan. A helical membrane pass occupies residues 39–59 (IVIGFWVGLAVFVIFMFFVLT).

The protein belongs to the MRAP family. In terms of assembly, interacts with mc4r. In terms of tissue distribution, expressed in adult brain.

It is found in the cell membrane. The protein resides in the endoplasmic reticulum membrane. Functionally, activator of melanocortin receptor 4 (mc4r), a receptor involved in energy homeostasis. Plays a role after larval development in the control of energy homeostasis and body weight regulation by increasing ligand-sensitivity of mc4r and mc4r-mediated generation of cAMP once the zebrafish begins feeding, increasing the capacity for regulated feeding and growth. This chain is Melanocortin-2 receptor accessory protein 2B (mrap2b), found in Danio rerio (Zebrafish).